Reading from the N-terminus, the 322-residue chain is METNLSEEKQKPSKSQAQQRRQMENYEFSQLANELPLARAISGQHIDKTTMVRLATAYIKLHNIFGQSQRAYSSADYYYGSDSLWTNNHLDLLDGFFVILDRRGDVLYISETISIYLGLSQVEMTGNAMVDYIHEQDINCFNSALNYCDLNWPQMCNVRVKSSLTKRANKDAVRASPGYKVLRLEITMGPNTNTRMIACYPMPTPVLSTVTIPSNSFVIITSIDLHITFADEKAHQLLNNPFYPDSNIKGMSLYSLIDISDSEVISKMHFDIFNLGAYKTPYYRMILNQTSETFYVESNIFRHTSISSKQFNDSITFVSSIL.

Positions 1-11 (METNLSEEKQK) are enriched in basic and acidic residues. Positions 1 to 23 (METNLSEEKQKPSKSQAQQRRQM) are disordered. The bHLH domain maps to 8–62 (EKQKPSKSQAQQRRQMENYEFSQLANELPLARAISGQHIDKTTMVRLATAYIKLH). PAS domains follow at residues 82–152 (DSLW…DLNW) and 203–276 (PTPV…FNLG).

Efficient DNA binding requires dimerization with another bHLH protein. Expressed in a small subset of neurons, probably AVJL and AVJR. Expressed in the AVH neurons.

The protein localises to the nucleus. In terms of biological role, transcription factor. Involved in specifying AVH neuron identity, acting in concert with unc-42. Involved in serotonin-mediated feeding behavior, probably acting by modulating expression of genes involved in glutamate signaling. The protein is Helix-loop-helix 34 (hlh-34) of Caenorhabditis elegans.